We begin with the raw amino-acid sequence, 302 residues long: Catechol 1,2-dioxygenase (302 aa).

Fe cation contacts are provided by Y164, Y198, H222, and H224.

Belongs to the intradiol ring-cleavage dioxygenase family. The cofactor is Fe(3+).

The enzyme catalyses catechol + O2 = cis,cis-muconate + 2 H(+). Its pathway is aromatic compound metabolism; beta-ketoadipate pathway; 5-oxo-4,5-dihydro-2-furylacetate from catechol: step 1/3. The sequence is that of Catechol 1,2-dioxygenase (pheB) from Pseudomonas sp. (strain EST1001).